The chain runs to 96 residues: Co-chaperonin GroES (96 aa).

The protein belongs to the GroES chaperonin family. Heptamer of 7 subunits arranged in a ring. Interacts with the chaperonin GroEL.

It localises to the cytoplasm. Together with the chaperonin GroEL, plays an essential role in assisting protein folding. The GroEL-GroES system forms a nano-cage that allows encapsulation of the non-native substrate proteins and provides a physical environment optimized to promote and accelerate protein folding. GroES binds to the apical surface of the GroEL ring, thereby capping the opening of the GroEL channel. This is Co-chaperonin GroES from Halorhodospira halophila (strain DSM 244 / SL1) (Ectothiorhodospira halophila (strain DSM 244 / SL1)).